Here is a 267-residue protein sequence, read N- to C-terminus: 5'-nucleotidase SurE (267 aa).

Positions 9, 10, 41, and 95 each coordinate a divalent metal cation.

It belongs to the SurE nucleotidase family. Requires a divalent metal cation as cofactor.

Its subcellular location is the cytoplasm. The catalysed reaction is a ribonucleoside 5'-phosphate + H2O = a ribonucleoside + phosphate. Nucleotidase that shows phosphatase activity on nucleoside 5'-monophosphates. This is 5'-nucleotidase SurE from Aeropyrum pernix (strain ATCC 700893 / DSM 11879 / JCM 9820 / NBRC 100138 / K1).